Consider the following 234-residue polypeptide: Small ribosomal subunit protein uS5 (234 aa).

Residues 1 to 10 show a composition bias toward polar residues; that stretch reads MEDIKTTTPE. The tract at residues 1-69 is disordered; that stretch reads MEDIKTTTPE…KDGSGNKPNK (69 aa). Positions 11 to 31 are enriched in basic and acidic residues; the sequence is VKNEENKTSEVKEGKALEKNN. Positions 78–141 constitute an S5 DRBM domain; sequence LEEKIVGVKK…KSAKNNMYKV (64 aa).

It belongs to the universal ribosomal protein uS5 family. In terms of assembly, part of the 30S ribosomal subunit. Contacts proteins S4 and S8.

With S4 and S12 plays an important role in translational accuracy. Functionally, located at the back of the 30S subunit body where it stabilizes the conformation of the head with respect to the body. This chain is Small ribosomal subunit protein uS5, found in Malacoplasma penetrans (strain HF-2) (Mycoplasma penetrans).